The chain runs to 256 residues: Imidazole glycerol phosphate synthase subunit HisF (256 aa).

Catalysis depends on residues Asp-12 and Asp-131.

This sequence belongs to the HisA/HisF family. In terms of assembly, heterodimer of HisH and HisF.

It localises to the cytoplasm. It carries out the reaction 5-[(5-phospho-1-deoxy-D-ribulos-1-ylimino)methylamino]-1-(5-phospho-beta-D-ribosyl)imidazole-4-carboxamide + L-glutamine = D-erythro-1-(imidazol-4-yl)glycerol 3-phosphate + 5-amino-1-(5-phospho-beta-D-ribosyl)imidazole-4-carboxamide + L-glutamate + H(+). It functions in the pathway amino-acid biosynthesis; L-histidine biosynthesis; L-histidine from 5-phospho-alpha-D-ribose 1-diphosphate: step 5/9. Its function is as follows. IGPS catalyzes the conversion of PRFAR and glutamine to IGP, AICAR and glutamate. The HisF subunit catalyzes the cyclization activity that produces IGP and AICAR from PRFAR using the ammonia provided by the HisH subunit. This Azotobacter vinelandii (strain DJ / ATCC BAA-1303) protein is Imidazole glycerol phosphate synthase subunit HisF.